A 162-amino-acid chain; its full sequence is tRNA (cytidine(34)-2'-O)-methyltransferase (162 aa).

Leu83, Gly105, Ile127, and Ser135 together coordinate S-adenosyl-L-methionine.

This sequence belongs to the class IV-like SAM-binding methyltransferase superfamily. RNA methyltransferase TrmH family. TrmL subfamily. In terms of assembly, homodimer.

It is found in the cytoplasm. It carries out the reaction cytidine(34) in tRNA + S-adenosyl-L-methionine = 2'-O-methylcytidine(34) in tRNA + S-adenosyl-L-homocysteine + H(+). The enzyme catalyses 5-carboxymethylaminomethyluridine(34) in tRNA(Leu) + S-adenosyl-L-methionine = 5-carboxymethylaminomethyl-2'-O-methyluridine(34) in tRNA(Leu) + S-adenosyl-L-homocysteine + H(+). In terms of biological role, methylates the ribose at the nucleotide 34 wobble position in the two leucyl isoacceptors tRNA(Leu)(CmAA) and tRNA(Leu)(cmnm5UmAA). Catalyzes the methyl transfer from S-adenosyl-L-methionine to the 2'-OH of the wobble nucleotide. The chain is tRNA (cytidine(34)-2'-O)-methyltransferase from Yersinia pestis.